The sequence spans 531 residues: UDP-glucuronosyltransferase 1A6 (531 aa).

The N-terminal stretch at Met-1–Gly-26 is a signal peptide. N-linked (GlcNAc...) asparagine glycans are attached at residues Asn-293 and Asn-431. A helical transmembrane segment spans residues Val-489–Phe-505.

This sequence belongs to the UDP-glycosyltransferase family. Expressed in liver, kidney and at very low levels in colon.

The protein resides in the microsome. The protein localises to the endoplasmic reticulum membrane. It carries out the reaction glucuronate acceptor + UDP-alpha-D-glucuronate = acceptor beta-D-glucuronoside + UDP + H(+). The enzyme catalyses (5Z,8Z,11Z,14Z)-eicosatetraenoate + UDP-alpha-D-glucuronate = O-[(5Z),(8Z),(11Z),(14Z)-eicosatetraenoyl]-beta-D-glucuronate + UDP. The catalysed reaction is 15-hydroxy-(5Z,8Z,11Z,13E)-eicosatetraenoate + UDP-alpha-D-glucuronate = 15-O-(beta-D-glucuronosyl)-(5Z,8Z,11Z,14Z)-eicosatetraenoate + UDP + H(+). It catalyses the reaction (E)-ferulate + UDP-alpha-D-glucuronate = (E)-4-O-(beta-D-glucuronosyl)-ferulate + UDP + H(+). It carries out the reaction (E)-ferulate + UDP-alpha-D-glucuronate = (E)-ferulic acid beta-D-glucuronate ester + UDP. In terms of biological role, UDP-glucuronosyltransferase (UGT) that catalyzes phase II biotransformation reactions in which lipophilic substrates are conjugated with glucuronic acid to facilitate their inactivation and excretion from the body. Essential for the elimination and detoxification of drugs, xenobiotics and endogenous compounds. Involved in the glucuronidation of arachidonic acid (AA) and AA-derived eicosanoids including 15-HETE and 20-HETE. Conjugates small planar phenolic molecules such as 4-nitrophenol, 1-naphthol, and 4-methylumbelliferone. The bulky phenol 4-hydroxybiphenyl, androgens and estrogens are not substrates. 2-hydroxybiphenyl is an excellent substrate. Involved in the glucuronidation of the phytochemical ferulic acid at the phenolic or the carboxylic acid group. This chain is UDP-glucuronosyltransferase 1A6, found in Mus musculus (Mouse).